Consider the following 370-residue polypeptide: Calcium/calmodulin-dependent protein kinase type 1 (370 aa).

The 257-residue stretch at 20–276 folds into the Protein kinase domain; the sequence is YDFRDVLGTG…CEQALQHPWI (257 aa). Residues 26–34 and Lys49 contribute to the ATP site; that span reads LGTGAFSEV. Lys59 is covalently cross-linked (Glycyl lysine isopeptide (Lys-Gly) (interchain with G-Cter in ubiquitin)). The active-site Proton acceptor is the Asp141. Phosphothreonine; by CaMKK1 and CaMKK2 is present on Thr177. The tract at residues 276–316 is autoinhibitory domain; sequence IAGDTALDKNIHQSVSEQIKKNFAKSKWKQAFNATAVVRHM. The segment at 296–317 is calmodulin-binding; it reads KNFAKSKWKQAFNATAVVRHMR. A Nuclear export signal motif is present at residues 315 to 321; it reads HMRKLQL. Ser363 carries the post-translational modification Phosphoserine.

Belongs to the protein kinase superfamily. CAMK Ser/Thr protein kinase family. CaMK subfamily. Monomer. Interacts with XPO1. Interacts with MARK2, ARHGEF7/BETAPIX and GIT1. Phosphorylated by CaMKK1 and CaMKK2 on Thr-177. Post-translationally, polybiquitinated by the E3 ubiquitin-protein ligase complex SCF(FBXL12), leading to proteasomal degradation. As to expression, widely expressed. Expressed in cells of the zona glomerulosa of the adrenal cortex.

It localises to the cytoplasm. The protein resides in the nucleus. The enzyme catalyses L-seryl-[protein] + ATP = O-phospho-L-seryl-[protein] + ADP + H(+). It carries out the reaction L-threonyl-[protein] + ATP = O-phospho-L-threonyl-[protein] + ADP + H(+). Activated by Ca(2+)/calmodulin. Binding of calmodulin results in conformational change that relieves intrasteric autoinhibition and allows phosphorylation of Thr-177 within the activation loop by CaMKK1 or CaMKK2. Phosphorylation of Thr-177 results in several fold increase in total activity. Unlike CaMK4, is unable to exhibit autonomous activity after Ca(2+)/calmodulin activation. Its function is as follows. Calcium/calmodulin-dependent protein kinase that operates in the calcium-triggered CaMKK-CaMK1 signaling cascade and, upon calcium influx, regulates transcription activators activity, cell cycle, hormone production, cell differentiation, actin filament organization and neurite outgrowth. Recognizes the substrate consensus sequence [MVLIF]-x-R-x(2)-[ST]-x(3)-[MVLIF]. Regulates axonal extension and growth cone motility in hippocampal and cerebellar nerve cells. Upon NMDA receptor-mediated Ca(2+) elevation, promotes dendritic growth in hippocampal neurons and is essential in synapses for full long-term potentiation (LTP) and ERK2-dependent translational activation. Downstream of NMDA receptors, promotes the formation of spines and synapses in hippocampal neurons by phosphorylating ARHGEF7/BETAPIX on 'Ser-694', which results in the enhancement of ARHGEF7 activity and activation of RAC1. Promotes neuronal differentiation and neurite outgrowth by activation and phosphorylation of MARK2 on 'Ser-91', 'Ser-92', 'Ser-93' and 'Ser-294'. Promotes nuclear export of HDAC5 and binding to 14-3-3 by phosphorylation of 'Ser-259' and 'Ser-498' in the regulation of muscle cell differentiation. Regulates NUMB-mediated endocytosis by phosphorylation of NUMB on 'Ser-276' and 'Ser-295'. Involved in the regulation of basal and estrogen-stimulated migration of medulloblastoma cells through ARHGEF7/BETAPIX phosphorylation. Is required for proper activation of cyclin-D1/CDK4 complex during G1 progression in diploid fibroblasts. Plays a role in K(+) and ANG2-mediated regulation of the aldosterone synthase (CYP11B2) to produce aldosterone in the adrenal cortex. Phosphorylates EIF4G3/eIF4GII. In vitro phosphorylates CREB1, ATF1, CFTR, MYL9 and SYN1/synapsin I. This Homo sapiens (Human) protein is Calcium/calmodulin-dependent protein kinase type 1 (CAMK1).